A 311-amino-acid polypeptide reads, in one-letter code: GTP cyclohydrolase FolE2 (311 aa).

It belongs to the GTP cyclohydrolase IV family.

It catalyses the reaction GTP + H2O = 7,8-dihydroneopterin 3'-triphosphate + formate + H(+). It participates in cofactor biosynthesis; 7,8-dihydroneopterin triphosphate biosynthesis; 7,8-dihydroneopterin triphosphate from GTP: step 1/1. Functionally, converts GTP to 7,8-dihydroneopterin triphosphate. The sequence is that of GTP cyclohydrolase FolE2 from Xanthomonas campestris pv. campestris (strain 8004).